A 291-amino-acid chain; its full sequence is N-acetylmannosamine kinase (291 aa).

ATP-binding positions include 5–12 (AIDIGGTK) and 132–139 (GVGGGVVS). Positions 156, 166, 168, and 173 each coordinate Zn(2+).

It belongs to the ROK (NagC/XylR) family. NanK subfamily. Homodimer.

The catalysed reaction is an N-acyl-D-mannosamine + ATP = an N-acyl-D-mannosamine 6-phosphate + ADP + H(+). Its pathway is amino-sugar metabolism; N-acetylneuraminate degradation; D-fructose 6-phosphate from N-acetylneuraminate: step 2/5. Its function is as follows. Catalyzes the phosphorylation of N-acetylmannosamine (ManNAc) to ManNAc-6-P. This is N-acetylmannosamine kinase from Escherichia coli (strain SMS-3-5 / SECEC).